Here is a 296-residue protein sequence, read N- to C-terminus: MIKQYLQVTKPGIIFGNLISVIGGFLLAAQGRIDYPLFLATLVGVSLVVASGCVFNNVIDRDIDKKMERTKNRVLVKGLISLKVTLVYASLLGIAGFALLYVAANPLAMWLAVMGFVVYVGVYSLYMKRHSVYGTLIGSLSGAAPPVIGYCAVSNQFDAGALILLLIFSLWQMPHSYAIAIFRFKDYQAANIPVLPVVKGISVAKNHITLYIVAFAIATLMLSLGGYAGYKYLIVAAAVSVWWLGMALSGYKNAIDDRVWARKLFVFSIVAITSLSVMMSVDSMAPAHEVLLTYLR.

A run of 9 helical transmembrane segments spans residues 11–31 (PGIIFGNLISVIGGFLLAAQG), 35–55 (YPLFLATLVGVSLVVASGCVF), 84–104 (VTLVYASLLGIAGFALLYVAA), 107–127 (LAMWLAVMGFVVYVGVYSLYM), 132–152 (VYGTLIGSLSGAAPPVIGYCA), 162–182 (LILLLIFSLWQMPHSYAIAIF), 208–228 (ITLYIVAFAIATLMLSLGGYA), 229–249 (GYKYLIVAAAVSVWWLGMALS), and 264–284 (LFVFSIVAITSLSVMMSVDSM).

This sequence belongs to the UbiA prenyltransferase family. Protoheme IX farnesyltransferase subfamily.

The protein localises to the cell inner membrane. The enzyme catalyses heme b + (2E,6E)-farnesyl diphosphate + H2O = Fe(II)-heme o + diphosphate. It participates in porphyrin-containing compound metabolism; heme O biosynthesis; heme O from protoheme: step 1/1. Functionally, converts heme B (protoheme IX) to heme O by substitution of the vinyl group on carbon 2 of heme B porphyrin ring with a hydroxyethyl farnesyl side group. The protein is Protoheme IX farnesyltransferase of Pectobacterium atrosepticum (strain SCRI 1043 / ATCC BAA-672) (Erwinia carotovora subsp. atroseptica).